The following is a 153-amino-acid chain: 3-hydroxyacyl-[acyl-carrier-protein] dehydratase FabZ (153 aa).

The active site involves His-54.

The protein belongs to the thioester dehydratase family. FabZ subfamily.

The protein localises to the cytoplasm. The enzyme catalyses a (3R)-hydroxyacyl-[ACP] = a (2E)-enoyl-[ACP] + H2O. Involved in unsaturated fatty acids biosynthesis. Catalyzes the dehydration of short chain beta-hydroxyacyl-ACPs and long chain saturated and unsaturated beta-hydroxyacyl-ACPs. The chain is 3-hydroxyacyl-[acyl-carrier-protein] dehydratase FabZ from Shewanella denitrificans (strain OS217 / ATCC BAA-1090 / DSM 15013).